A 419-amino-acid chain; its full sequence is Tyrosine--tRNA ligase 2 (419 aa).

Tyr-34 is an L-tyrosine binding site. Residues 39–48 (PTGDSMHIGH) carry the 'HIGH' region motif. Tyr-168 and Gln-172 together coordinate L-tyrosine. A 'KMSKS' region motif is present at residues 230–234 (KFGKS). ATP is bound at residue Lys-233. Positions 352–418 (KNIVEWLVDL…GKKNYSLVKL (67 aa)) constitute an S4 RNA-binding domain.

It belongs to the class-I aminoacyl-tRNA synthetase family. TyrS type 1 subfamily. In terms of assembly, homodimer.

Its subcellular location is the cytoplasm. The enzyme catalyses tRNA(Tyr) + L-tyrosine + ATP = L-tyrosyl-tRNA(Tyr) + AMP + diphosphate + H(+). Catalyzes the attachment of tyrosine to tRNA(Tyr) in a two-step reaction: tyrosine is first activated by ATP to form Tyr-AMP and then transferred to the acceptor end of tRNA(Tyr). This Bacillus cereus (strain ATCC 10987 / NRS 248) protein is Tyrosine--tRNA ligase 2.